The following is a 377-amino-acid chain: 4-hydroxy-3-methylbut-2-en-1-yl diphosphate synthase (flavodoxin) (377 aa).

[4Fe-4S] cluster is bound by residues Cys275, Cys278, Cys310, and Glu317.

It belongs to the IspG family. The cofactor is [4Fe-4S] cluster.

It carries out the reaction (2E)-4-hydroxy-3-methylbut-2-enyl diphosphate + oxidized [flavodoxin] + H2O + 2 H(+) = 2-C-methyl-D-erythritol 2,4-cyclic diphosphate + reduced [flavodoxin]. It functions in the pathway isoprenoid biosynthesis; isopentenyl diphosphate biosynthesis via DXP pathway; isopentenyl diphosphate from 1-deoxy-D-xylulose 5-phosphate: step 5/6. Its function is as follows. Converts 2C-methyl-D-erythritol 2,4-cyclodiphosphate (ME-2,4cPP) into 1-hydroxy-2-methyl-2-(E)-butenyl 4-diphosphate. The polypeptide is 4-hydroxy-3-methylbut-2-en-1-yl diphosphate synthase (flavodoxin) (Ruegeria sp. (strain TM1040) (Silicibacter sp.)).